Reading from the N-terminus, the 215-residue chain is Chaperone protein TorD (215 aa).

The protein belongs to the TorD/DmsD family. TorD subfamily.

The protein localises to the cytoplasm. Its function is as follows. Involved in the biogenesis of TorA. Acts on TorA before the insertion of the molybdenum cofactor and, as a result, probably favors a conformation of the apoenzyme that is competent for acquiring the cofactor. This chain is Chaperone protein TorD, found in Aliivibrio salmonicida (strain LFI1238) (Vibrio salmonicida (strain LFI1238)).